Consider the following 299-residue polypeptide: 4-diphosphocytidyl-2-C-methyl-D-erythritol kinase (299 aa).

The active site involves Lys11. 94-104 (PQGGGLGGGSS) is a binding site for ATP. The active site involves Asp136.

It belongs to the GHMP kinase family. IspE subfamily.

It carries out the reaction 4-CDP-2-C-methyl-D-erythritol + ATP = 4-CDP-2-C-methyl-D-erythritol 2-phosphate + ADP + H(+). It functions in the pathway isoprenoid biosynthesis; isopentenyl diphosphate biosynthesis via DXP pathway; isopentenyl diphosphate from 1-deoxy-D-xylulose 5-phosphate: step 3/6. Its function is as follows. Catalyzes the phosphorylation of the position 2 hydroxy group of 4-diphosphocytidyl-2C-methyl-D-erythritol. In Bordetella parapertussis (strain 12822 / ATCC BAA-587 / NCTC 13253), this protein is 4-diphosphocytidyl-2-C-methyl-D-erythritol kinase.